A 377-amino-acid polypeptide reads, in one-letter code: Phosphoserine aminotransferase (377 aa).

Residue Arg-43 coordinates L-glutamate. Residues Trp-105, Thr-164, Asp-189, and Gln-212 each coordinate pyridoxal 5'-phosphate. N6-(pyridoxal phosphate)lysine is present on Lys-213. 254 to 255 contributes to the pyridoxal 5'-phosphate binding site; the sequence is NT.

It belongs to the class-V pyridoxal-phosphate-dependent aminotransferase family. SerC subfamily. Homodimer. The cofactor is pyridoxal 5'-phosphate.

The protein localises to the cytoplasm. The catalysed reaction is O-phospho-L-serine + 2-oxoglutarate = 3-phosphooxypyruvate + L-glutamate. It catalyses the reaction 4-(phosphooxy)-L-threonine + 2-oxoglutarate = (R)-3-hydroxy-2-oxo-4-phosphooxybutanoate + L-glutamate. The protein operates within amino-acid biosynthesis; L-serine biosynthesis; L-serine from 3-phospho-D-glycerate: step 2/3. It participates in cofactor biosynthesis; pyridoxine 5'-phosphate biosynthesis; pyridoxine 5'-phosphate from D-erythrose 4-phosphate: step 3/5. Its function is as follows. Catalyzes the reversible conversion of 3-phosphohydroxypyruvate to phosphoserine and of 3-hydroxy-2-oxo-4-phosphonooxybutanoate to phosphohydroxythreonine. This is Phosphoserine aminotransferase from Bordetella pertussis (strain Tohama I / ATCC BAA-589 / NCTC 13251).